Reading from the N-terminus, the 209-residue chain is Kynurenine formamidase (209 aa).

W20 contributes to the substrate binding site. H50, H54, and D56 together coordinate Zn(2+). H60 acts as the Proton donor/acceptor in catalysis. Residues H161 and E173 each contribute to the Zn(2+) site.

Belongs to the Cyclase 1 superfamily. KynB family. As to quaternary structure, homodimer. The cofactor is Zn(2+).

The catalysed reaction is N-formyl-L-kynurenine + H2O = L-kynurenine + formate + H(+). It participates in amino-acid degradation; L-tryptophan degradation via kynurenine pathway; L-kynurenine from L-tryptophan: step 2/2. Functionally, catalyzes the hydrolysis of N-formyl-L-kynurenine to L-kynurenine, the second step in the kynurenine pathway of tryptophan degradation. This Bacillus cereus (strain ATCC 10987 / NRS 248) protein is Kynurenine formamidase.